An 892-amino-acid chain; its full sequence is Alanine--tRNA ligase (892 aa).

Residues His-574, His-578, Cys-676, and His-680 each contribute to the Zn(2+) site.

The protein belongs to the class-II aminoacyl-tRNA synthetase family. It depends on Zn(2+) as a cofactor.

It localises to the cytoplasm. It catalyses the reaction tRNA(Ala) + L-alanine + ATP = L-alanyl-tRNA(Ala) + AMP + diphosphate. In terms of biological role, catalyzes the attachment of alanine to tRNA(Ala) in a two-step reaction: alanine is first activated by ATP to form Ala-AMP and then transferred to the acceptor end of tRNA(Ala). Also edits incorrectly charged Ser-tRNA(Ala) and Gly-tRNA(Ala) via its editing domain. This chain is Alanine--tRNA ligase, found in Prochlorococcus marinus (strain MIT 9303).